The chain runs to 396 residues: Corticosteroid-binding globulin (396 aa).

The signal sequence occupies residues 1–22 (MSLALYTCLLWLCTSGLWTAQA). Residues N88 and N216 are each glycosylated (N-linked (GlcNAc...) asparagine). Residue Q246 participates in cortisol binding. N-linked (GlcNAc...) asparagine glycosylation occurs at N252. Cortisol is bound at residue D278. 2 N-linked (GlcNAc...) asparagine glycosylation sites follow: N319 and N352. Residue W384 coordinates cortisol.

It belongs to the serpin family. Expressed by the liver; secreted in plasma.

The protein resides in the secreted. In terms of biological role, major transport protein for glucocorticoids and progestins in the blood of almost all vertebrate species. The protein is Corticosteroid-binding globulin (Serpina6) of Rattus norvegicus (Rat).